Consider the following 455-residue polypeptide: 1,4-beta-D-glucan cellobiohydrolase C (455 aa).

The first 19 residues, 1-19 (MHYSASGLALAFLLPAIQA), serve as a signal peptide directing secretion. Residues 20 to 55 (QQTLYGQCGGSGWTGATSCVAGAACSTLNQWYAQCL) enclose the CBM1 domain. 2 disulfides stabilise this stretch: C27-C44 and C38-C54. The tract at residues 59–92 (TTTSTTLTTTTSSVTTTSNPGSTTTTSSVTVTAT) is thr-rich linker. The segment at 66–86 (TTTTSSVTTTSNPGSTTTTSS) is disordered. The interval 93–450 (ASGNPFSGYQ…QAYFVQLLQN (358 aa)) is catalytic. The active site involves D185. Cystine bridges form between C186–C245 and C377–C424. D231 serves as the catalytic Proton donor. The active-site Nucleophile is the D410.

This sequence belongs to the glycosyl hydrolase 6 (cellulase B) family.

It is found in the secreted. It carries out the reaction Hydrolysis of (1-&gt;4)-beta-D-glucosidic linkages in cellulose and cellotetraose, releasing cellobiose from the non-reducing ends of the chains.. Its function is as follows. The biological conversion of cellulose to glucose generally requires three types of hydrolytic enzymes: (1) Endoglucanases which cut internal beta-1,4-glucosidic bonds; (2) Exocellobiohydrolases that cut the disaccharide cellobiose from the non-reducing end of the cellulose polymer chain; (3) Beta-1,4-glucosidases which hydrolyze the cellobiose and other short cello-oligosaccharides to glucose. Active against carboxymethylcellulose, beta-glucan and lichenan. The sequence is that of 1,4-beta-D-glucan cellobiohydrolase C (cbhC) from Emericella nidulans (strain FGSC A4 / ATCC 38163 / CBS 112.46 / NRRL 194 / M139) (Aspergillus nidulans).